A 1106-amino-acid chain; its full sequence is DNA polymerase delta catalytic subunit (1106 aa).

The disordered stretch occupies residues 1–28; the sequence is MDGKRRPGPGPGVPPKRARGGLWDEDEA. The Nuclear localization signal motif lies at 4-19; the sequence is KRRPGPGPGVPPKRAR. Arg-19 is subject to Omega-N-methylarginine. Residue Lys-573 forms a Glycyl lysine isopeptide (Lys-Gly) (interchain with G-Cter in SUMO2) linkage. 4 residues coordinate Zn(2+): Cys-1011, Cys-1014, Cys-1025, and Cys-1028. The CysA-type zinc-finger motif lies at 1011–1028; that stretch reads CIGCRTVLSHQGAVCKFC. 4 residues coordinate [4Fe-4S] cluster: Cys-1057, Cys-1060, Cys-1070, and Cys-1075. The short motif at 1057 to 1075 is the CysB motif element; sequence CQRCQGSLHEDVICTSRDC.

Belongs to the DNA polymerase type-B family. In terms of assembly, component of the tetrameric DNA polymerase delta complex (Pol-delta4), which consists of POLD1/p125, POLD2/p50, POLD3/p66/p68 and POLD4/p12, with POLD1 bearing both DNA polymerase and 3' to 5' proofreading exonuclease activities. Within Pol-delta4, directly interacts with POLD2 and POLD4. Following genotoxic stress by DNA-damaging agents, such as ultraviolet light and methyl methanesulfonate, or by replication stress induced by treatment with hydroxyurea or aphidicolin, Pol-delta4 is converted into a trimeric form of the complex (Pol-delta3) by POLD4 degradation. Pol-delta3 is the major form at S phase replication sites and DNA damage sites. POLD1 displays different catalytic properties depending upon the complex it is found in. It exhibits higher proofreading activity and fidelity than Pol-delta4, making it particularly well suited to respond to DNA damage. Directly interacts with PCNA, as do POLD3 and POLD4; this interaction stimulates Pol-delta4 polymerase activity. As POLD2 and POLD4, directly interacts with WRNIP1; this interaction stimulates DNA polymerase delta-mediated DNA synthesis, independently of the presence of PCNA. This stimulation may be due predominantly to an increase of initiation frequency and also to increased processivity. Also observed as a dimeric complex with POLD2 (Pol-delta2). Pol-delta2 is relatively insensitive to the PCNA stimulation (2-5-fold) compared to Pol-delta4 that is stimulated by over 50-fold. Interacts with POLDIP2; this interaction is indirect and most probably mediated through POLD2-binding. Interacts with CIAO1. Interacts with POLDIP2. Interacts with RFC1. [4Fe-4S] cluster is required as a cofactor.

Its subcellular location is the nucleus. The catalysed reaction is DNA(n) + a 2'-deoxyribonucleoside 5'-triphosphate = DNA(n+1) + diphosphate. With respect to regulation, regulated by alteration of quaternary structure. Exhibits burst rates of DNA synthesis are about 5 times faster in the presence of POLD4 (Pol-delta4 complex) than in its absence (Pol-delta3 complex), while the affinity of the enzyme for its DNA and dNTP substrates appears unchanged. The Pol-delta3 complex is more likely to proofread DNA synthesis because it cleaves single-stranded DNA twice as fast and transfers mismatched DNA from the polymerase to the exonuclease sites 9 times faster compared to the Pol-delta3 complex. Pol-delta3 also extends mismatched primers 3 times more slowly in the absence of POLD4. The conversion of Pol-delta4 into Pol-delta3 is induced by genotoxic stress or by replication stress leading POLD4 degradation. Stimulated in the presence of PCNA. This stimulation is further increased in the presence of KCTD13/PDIP1, most probably via direct interaction between KCTD13 and POLD2. Functionally, as the catalytic component of the trimeric (Pol-delta3 complex) and tetrameric DNA polymerase delta complexes (Pol-delta4 complex), plays a crucial role in high fidelity genome replication, including in lagging strand synthesis, and repair. Exhibits both DNA polymerase and 3'- to 5'-exonuclease activities. Requires the presence of accessory proteins POLD2, POLD3 and POLD4 for full activity. Depending upon the absence (Pol-delta3) or the presence of POLD4 (Pol-delta4), displays differences in catalytic activity. Most notably, expresses higher proofreading activity in the context of Pol-delta3 compared with that of Pol-delta4. Although both Pol-delta3 and Pol-delta4 process Okazaki fragments in vitro, Pol-delta3 may be better suited to fulfill this task, exhibiting near-absence of strand displacement activity compared to Pol-delta4 and stalling on encounter with the 5'-blocking oligonucleotides. Pol-delta3 idling process may avoid the formation of a gap, while maintaining a nick that can be readily ligated. Along with DNA polymerase kappa, DNA polymerase delta carries out approximately half of nucleotide excision repair (NER) synthesis following UV irradiation. Under conditions of DNA replication stress, in the presence of POLD3 and POLD4, may catalyze the repair of broken replication forks through break-induced replication (BIR). Involved in the translesion synthesis (TLS) of templates carrying O6-methylguanine, 8oxoG or abasic sites. This is DNA polymerase delta catalytic subunit (POLD1) from Bos taurus (Bovine).